The sequence spans 253 residues: Glucosamine-6-phosphate deaminase (253 aa).

The Proton acceptor; for enolization step role is filled by Asp67. Asn136 serves as the catalytic For ring-opening step. His138 acts as the Proton acceptor; for ring-opening step in catalysis. Glu143 (for ring-opening step) is an active-site residue.

It belongs to the glucosamine/galactosamine-6-phosphate isomerase family. NagB subfamily.

It carries out the reaction alpha-D-glucosamine 6-phosphate + H2O = beta-D-fructose 6-phosphate + NH4(+). It participates in amino-sugar metabolism; N-acetylneuraminate degradation; D-fructose 6-phosphate from N-acetylneuraminate: step 5/5. Its function is as follows. Catalyzes the reversible isomerization-deamination of glucosamine 6-phosphate (GlcN6P) to form fructose 6-phosphate (Fru6P) and ammonium ion. The chain is Glucosamine-6-phosphate deaminase from Thermoanaerobacter pseudethanolicus (strain ATCC 33223 / 39E) (Clostridium thermohydrosulfuricum).